A 334-amino-acid polypeptide reads, in one-letter code: Formamidase (334 aa).

The CN hydrolase domain maps to 14-260 (MLMGLVQYPV…WEIVTAEVFP (247 aa)). Glutamate 60 (proton acceptor) is an active-site residue. The active-site Proton donor is the lysine 133. The active-site Nucleophile is the cysteine 166.

The protein belongs to the carbon-nitrogen hydrolase superfamily. Aliphatic amidase family.

The enzyme catalyses formamide + H2O = formate + NH4(+). Functionally, is an aliphatic amidase with a restricted substrate specificity, as it only hydrolyzes formamide. This is Formamidase from Nitratidesulfovibrio vulgaris (strain DP4) (Desulfovibrio vulgaris).